A 296-amino-acid polypeptide reads, in one-letter code: MPELPEVEVVRRGLDAHVTGKAITAVRVHHPRAVRRHEAGPADLTARLLGMRITGTGRRGKYLWLTLDGGDEPLARRAESSVALVVHLGMSGQMLLGPIPKEDHLRIAALLDDGTALSFVDQRTFGGWLLADLVTVDGTDVPVPVAHVARDPLDPRFDRDAVVKVLRGKHSEIKRQLLDQTVVSGIGNIYADEALWRAKVNGARLAESLTKPKLAEILDHAADVMRDALGQGGTSFDSLYVNVNGESGYFDRSLDAYGREGEPCRRCGAIMRREKFMNRSSFYCPRCQPRPRVRRA.

Pro2 functions as the Schiff-base intermediate with DNA in the catalytic mechanism. Catalysis depends on Glu3, which acts as the Proton donor. Lys61 acts as the Proton donor; for beta-elimination activity in catalysis. 3 residues coordinate DNA: His104, Arg123, and Lys169. The segment at 255–289 (DAYGREGEPCRRCGAIMRREKFMNRSSFYCPRCQP) adopts an FPG-type zinc-finger fold. The active-site Proton donor; for delta-elimination activity is Arg279.

Belongs to the FPG family. In terms of assembly, monomer. Zn(2+) serves as cofactor.

The enzyme catalyses Hydrolysis of DNA containing ring-opened 7-methylguanine residues, releasing 2,6-diamino-4-hydroxy-5-(N-methyl)formamidopyrimidine.. It carries out the reaction 2'-deoxyribonucleotide-(2'-deoxyribose 5'-phosphate)-2'-deoxyribonucleotide-DNA = a 3'-end 2'-deoxyribonucleotide-(2,3-dehydro-2,3-deoxyribose 5'-phosphate)-DNA + a 5'-end 5'-phospho-2'-deoxyribonucleoside-DNA + H(+). In terms of biological role, involved in base excision repair of DNA damaged by oxidation or by mutagenic agents. Acts as a DNA glycosylase that recognizes and removes damaged bases. Has a preference for oxidized purines, such as 7,8-dihydro-8-oxoguanine (8-oxoG). Has AP (apurinic/apyrimidinic) lyase activity and introduces nicks in the DNA strand. Cleaves the DNA backbone by beta-delta elimination to generate a single-strand break at the site of the removed base with both 3'- and 5'-phosphates. The sequence is that of Formamidopyrimidine-DNA glycosylase from Mycobacterium sp. (strain JLS).